The sequence spans 334 residues: MIEADRLIAPISNHFKDEEVIDRAIRPKKLADYQGQDHVRDQMEIFIQAAQMRQEALDHLLIFGPPGLGKTTLANIVANEMGVNIRTTSGPVLEKAGDLAALLTNLEENDVLFIDEIHRLSPMVEEVLYPAMEDYQLDIMIGEGPAARSIKIDLPPFTLIGATTRAGSLTSPLRDRFGIVQRLEYYKVADLQHIVQRSAQCLGLSMDSEGALEVARRARGTPRIVNRLLRRVRDYAEVKGDGHICAQTADRALNMLDVDHQGFDYMDRKLLLAIMEKFSGGPVGIDNLAAAIGEEKDTIEDVLEPFLIQQGYLQRTPRGRIATDRAYLHFGIEK.

The interval A4–Y186 is large ATPase domain (RuvB-L). ATP contacts are provided by residues I25, R26, G67, K70, T71, T72, E133–Y135, R176, Y186, and R223. T71 contacts Mg(2+). The tract at residues K187–D257 is small ATPAse domain (RuvB-S). The head domain (RuvB-H) stretch occupies residues H260–K334. Residues R315 and R320 each coordinate DNA.

This sequence belongs to the RuvB family. As to quaternary structure, homohexamer. Forms an RuvA(8)-RuvB(12)-Holliday junction (HJ) complex. HJ DNA is sandwiched between 2 RuvA tetramers; dsDNA enters through RuvA and exits via RuvB. An RuvB hexamer assembles on each DNA strand where it exits the tetramer. Each RuvB hexamer is contacted by two RuvA subunits (via domain III) on 2 adjacent RuvB subunits; this complex drives branch migration. In the full resolvosome a probable DNA-RuvA(4)-RuvB(12)-RuvC(2) complex forms which resolves the HJ.

The protein resides in the cytoplasm. The catalysed reaction is ATP + H2O = ADP + phosphate + H(+). In terms of biological role, the RuvA-RuvB-RuvC complex processes Holliday junction (HJ) DNA during genetic recombination and DNA repair, while the RuvA-RuvB complex plays an important role in the rescue of blocked DNA replication forks via replication fork reversal (RFR). RuvA specifically binds to HJ cruciform DNA, conferring on it an open structure. The RuvB hexamer acts as an ATP-dependent pump, pulling dsDNA into and through the RuvAB complex. RuvB forms 2 homohexamers on either side of HJ DNA bound by 1 or 2 RuvA tetramers; 4 subunits per hexamer contact DNA at a time. Coordinated motions by a converter formed by DNA-disengaged RuvB subunits stimulates ATP hydrolysis and nucleotide exchange. Immobilization of the converter enables RuvB to convert the ATP-contained energy into a lever motion, pulling 2 nucleotides of DNA out of the RuvA tetramer per ATP hydrolyzed, thus driving DNA branch migration. The RuvB motors rotate together with the DNA substrate, which together with the progressing nucleotide cycle form the mechanistic basis for DNA recombination by continuous HJ branch migration. Branch migration allows RuvC to scan DNA until it finds its consensus sequence, where it cleaves and resolves cruciform DNA. In Vibrio cholerae serotype O1 (strain ATCC 39541 / Classical Ogawa 395 / O395), this protein is Holliday junction branch migration complex subunit RuvB.